The sequence spans 196 residues: Penicillin-binding protein activator LpoB (196 aa).

The signal sequence occupies residues 1 to 16; sequence MKKYLGIVLMALVIAG. The N-palmitoyl cysteine moiety is linked to residue C17. Residue C17 is the site of S-diacylglycerol cysteine attachment. Residues 24–54 form a disordered region; that stretch reads TEQPATIEPAVPTPSKPQLPPSESQPLPTPP. Pro residues predominate over residues 34–43; the sequence is VPTPSKPQLP.

Belongs to the LpoB family. Interacts with PBP1b.

The protein localises to the cell outer membrane. In terms of biological role, regulator of peptidoglycan synthesis that is essential for the function of penicillin-binding protein 1B (PBP1b). The protein is Penicillin-binding protein activator LpoB of Dickeya dadantii (strain 3937) (Erwinia chrysanthemi (strain 3937)).